The following is a 685-amino-acid chain: DNA ligase (685 aa).

Residues 47–51 (DSEYD), 96–97 (SL), and glutamate 125 each bind NAD(+). Lysine 127 (N6-AMP-lysine intermediate) is an active-site residue. NAD(+)-binding residues include arginine 148, glutamate 185, lysine 304, and lysine 328. Zn(2+)-binding residues include cysteine 422, cysteine 425, cysteine 440, and cysteine 446. In terms of domain architecture, BRCT spans 605–685 (ADAQPLKGQT…ALLALFAANR (81 aa)).

It belongs to the NAD-dependent DNA ligase family. LigA subfamily. It depends on Mg(2+) as a cofactor. Mn(2+) serves as cofactor.

It carries out the reaction NAD(+) + (deoxyribonucleotide)n-3'-hydroxyl + 5'-phospho-(deoxyribonucleotide)m = (deoxyribonucleotide)n+m + AMP + beta-nicotinamide D-nucleotide.. Functionally, DNA ligase that catalyzes the formation of phosphodiester linkages between 5'-phosphoryl and 3'-hydroxyl groups in double-stranded DNA using NAD as a coenzyme and as the energy source for the reaction. It is essential for DNA replication and repair of damaged DNA. The protein is DNA ligase of Shewanella putrefaciens (strain CN-32 / ATCC BAA-453).